The following is an 86-amino-acid chain: Probable weak neurotoxin NNAM3 (86 aa).

Positions 1-21 (MKTLLLTLVVVTIVCLDLGYT) are cleaved as a signal peptide. 5 disulfides stabilise this stretch: Cys-24-Cys-45, Cys-27-Cys-32, Cys-38-Cys-63, Cys-67-Cys-78, and Cys-79-Cys-84.

The protein belongs to the three-finger toxin family. Ancestral subfamily. Orphan group II sub-subfamily. In terms of tissue distribution, expressed by the venom gland.

It is found in the secreted. Its function is as follows. Binds with low affinity to muscular (alpha-1-beta-1-delta-epsilon/CHRNA1-CHRNB1-CHRND-CHRNE) and very low affinity to neuronal (alpha-7/CHRNA7) nicotinic acetylcholine receptor (nAChR). In Naja atra (Chinese cobra), this protein is Probable weak neurotoxin NNAM3.